A 145-amino-acid polypeptide reads, in one-letter code: D-aminoacyl-tRNA deacylase (145 aa).

The Gly-cisPro motif, important for rejection of L-amino acids signature appears at 137–138; it reads GP.

This sequence belongs to the DTD family. Homodimer.

The protein localises to the cytoplasm. It carries out the reaction glycyl-tRNA(Ala) + H2O = tRNA(Ala) + glycine + H(+). The enzyme catalyses a D-aminoacyl-tRNA + H2O = a tRNA + a D-alpha-amino acid + H(+). In terms of biological role, an aminoacyl-tRNA editing enzyme that deacylates mischarged D-aminoacyl-tRNAs. Also deacylates mischarged glycyl-tRNA(Ala), protecting cells against glycine mischarging by AlaRS. Acts via tRNA-based rather than protein-based catalysis; rejects L-amino acids rather than detecting D-amino acids in the active site. By recycling D-aminoacyl-tRNA to D-amino acids and free tRNA molecules, this enzyme counteracts the toxicity associated with the formation of D-aminoacyl-tRNA entities in vivo and helps enforce protein L-homochirality. The sequence is that of D-aminoacyl-tRNA deacylase from Enterobacter sp. (strain 638).